Here is a 193-residue protein sequence, read N- to C-terminus: Histone H5 (193 aa).

Residues 1 to 11 (TDSPIPAPAPA) show a composition bias toward pro residues. Disordered regions lie at residues 1–29 (TDSPIPAPAPAAKPKRARAPRKPASHPTY) and 80–193 (GVLK…PKKK). Over residues 13–24 (KPKRARAPRKPA) the composition is skewed to basic residues. The region spanning 25–98 (SHPTYSEMIA…GASGSFRLAK (74 aa)) is the H15 domain. Positions 104–193 (RSPAGRKKKK…SGARKSPKKK (90 aa)) are enriched in basic residues.

It belongs to the histone H1/H5 family. In terms of tissue distribution, erythroid cells.

The protein resides in the nucleus. It is found in the chromosome. Histone H5 performs the same function as H1, being necessary for the condensation of nucleosome chains into higher order structures, and replaces histone H1 in certain cells. In Anser anser anser (Western greylag goose), this protein is Histone H5.